The sequence spans 454 residues: Cobyrinate a,c-diamide synthase (454 aa).

In terms of domain architecture, GATase cobBQ-type spans 244–435 (KIAVAYDSAF…VHIHFLSNIA (192 aa)). The active-site Nucleophile is Cys-327.

This sequence belongs to the CobB/CbiA family. It depends on Mg(2+) as a cofactor.

The catalysed reaction is cob(II)yrinate + 2 L-glutamine + 2 ATP + 2 H2O = cob(II)yrinate a,c diamide + 2 L-glutamate + 2 ADP + 2 phosphate + 2 H(+). The protein operates within cofactor biosynthesis; adenosylcobalamin biosynthesis; cob(II)yrinate a,c-diamide from sirohydrochlorin (anaerobic route): step 10/10. In terms of biological role, catalyzes the ATP-dependent amidation of the two carboxylate groups at positions a and c of cobyrinate, using either L-glutamine or ammonia as the nitrogen source. This chain is Cobyrinate a,c-diamide synthase, found in Thermoplasma volcanium (strain ATCC 51530 / DSM 4299 / JCM 9571 / NBRC 15438 / GSS1).